A 172-amino-acid polypeptide reads, in one-letter code: Probable tryptophan transport protein (172 aa).

The next 4 membrane-spanning stretches (helical) occupy residues 7-29, 49-71, 104-126, and 136-158; these read VIMALFAAIGAALHSIIPPFLGG, VQNVLVIGIVTGIISALTTAFPA, AVLTVIGTILSGIVFLSSALLIV, and FAAVVLPAAVLNTISMIIIYPIV.

The protein belongs to the vitamin uptake transporter (VUT/ECF) (TC 2.A.88) family. TrpP subfamily.

It is found in the cell membrane. Its function is as follows. Probably involved in tryptophan uptake. This chain is Probable tryptophan transport protein (trpP), found in Bacillus subtilis (strain 168).